The chain runs to 423 residues: UPF0229 protein PSPTO_0546 (423 aa).

The interval 65–110 (HHGRGGKQTVVHPGNKEFTTGEHIARPQGGAGGKGPGKAGNSGEGM) is disordered. Positions 93-107 (GGAGGKGPGKAGNSG) are enriched in gly residues.

It belongs to the UPF0229 family.

The protein is UPF0229 protein PSPTO_0546 of Pseudomonas syringae pv. tomato (strain ATCC BAA-871 / DC3000).